The sequence spans 510 residues: Probable serine/threonine-protein kinase 2 (510 aa).

A Protein kinase domain is found at 111-364; the sequence is YVLNKKIGKG…ALQALGHQWF (254 aa). ATP is bound by residues 117–125 and lysine 140; that span reads IGKGSFSTA. Aspartate 230 functions as the Proton acceptor in the catalytic mechanism. Positions 408–428 are disordered; it reads NDDIYNNNNNNNQLDPNKNHK.

The protein belongs to the protein kinase superfamily. Ser/Thr protein kinase family.

It localises to the membrane. It catalyses the reaction L-seryl-[protein] + ATP = O-phospho-L-seryl-[protein] + ADP + H(+). The catalysed reaction is L-threonyl-[protein] + ATP = O-phospho-L-threonyl-[protein] + ADP + H(+). This chain is Probable serine/threonine-protein kinase 2 (PK2), found in Plasmodium falciparum (isolate K1 / Thailand).